The sequence spans 167 residues: uncharacterized protein (167 aa).

Positions 95-114 are disordered; it reads AHSLHHQSHQSDVQVHAKGN.

This is an uncharacterized protein from Haemophilus influenzae (Bacteriophage HP1).